We begin with the raw amino-acid sequence, 98 residues long: Large ribosomal subunit protein uL23 (98 aa).

The protein belongs to the universal ribosomal protein uL23 family. As to quaternary structure, part of the 50S ribosomal subunit. Contacts protein L29, and trigger factor when it is bound to the ribosome.

In terms of biological role, one of the early assembly proteins it binds 23S rRNA. One of the proteins that surrounds the polypeptide exit tunnel on the outside of the ribosome. Forms the main docking site for trigger factor binding to the ribosome. This Legionella pneumophila (strain Paris) protein is Large ribosomal subunit protein uL23.